Consider the following 241-residue polypeptide: MNRPSLAGAVHLHGFSRSFHGKQVLDDLGLDIAPGQFVALLGESGSGKTTLLRALAGLDVEARSSGTAVAHGNVSVLFQDSRLLPWLTVLDNLTLGLDAQAVRPAAAQLLREVGLADKAAAWPASLSGGQKQRAALARSLLREPHVLLADEPFGALDALTRLRMQGLLRRMVERVRPTVILVTHDVDESLLLADRILVLRDGKIAEDHALDLAHPRRPDHPAFMQLRATLLRSLGVEAEFV.

The ABC transporter domain occupies Val-10–Leu-226. Residue Gly-42–Thr-49 coordinates ATP.

The protein belongs to the ABC transporter superfamily. Aliphatic sulfonates importer (TC 3.A.1.17.2) family. In terms of assembly, the complex is composed of two ATP-binding proteins (SsuB), two transmembrane proteins (SsuC) and a solute-binding protein (SsuA).

The protein resides in the cell inner membrane. The catalysed reaction is ATP + H2O + aliphatic sulfonate-[sulfonate-binding protein]Side 1 = ADP + phosphate + aliphatic sulfonateSide 2 + [sulfonate-binding protein]Side 1.. Part of the ABC transporter complex SsuABC involved in aliphatic sulfonates import. Responsible for energy coupling to the transport system. In Delftia acidovorans (Pseudomonas acidovorans), this protein is Aliphatic sulfonates import ATP-binding protein SsuB.